The primary structure comprises 281 residues: Phosphatidylglycerol--prolipoprotein diacylglyceryl transferase (281 aa).

The next 4 membrane-spanning stretches (helical) occupy residues 29 to 49 (FYSL…GKMI), 64 to 84 (LFFY…VLFY), 100 to 120 (GGMS…FVSW), and 124 to 144 (LNWL…MFLG). R145 provides a ligand contact to a 1,2-diacyl-sn-glycero-3-phospho-(1'-sn-glycerol). Helical transmembrane passes span 180-200 (QLYQ…LLFW), 209-229 (GVLV…NEFF), and 248-268 (GQWL…YALT).

Belongs to the Lgt family.

The protein resides in the cell inner membrane. It catalyses the reaction L-cysteinyl-[prolipoprotein] + a 1,2-diacyl-sn-glycero-3-phospho-(1'-sn-glycerol) = an S-1,2-diacyl-sn-glyceryl-L-cysteinyl-[prolipoprotein] + sn-glycerol 1-phosphate + H(+). It functions in the pathway protein modification; lipoprotein biosynthesis (diacylglyceryl transfer). Its function is as follows. Catalyzes the transfer of the diacylglyceryl group from phosphatidylglycerol to the sulfhydryl group of the N-terminal cysteine of a prolipoprotein, the first step in the formation of mature lipoproteins. The protein is Phosphatidylglycerol--prolipoprotein diacylglyceryl transferase of Erythrobacter litoralis (strain HTCC2594).